The sequence spans 122 residues: Small ribosomal subunit protein uS13 (122 aa).

Residues 97–122 form a disordered region; that stretch reads PVRGQRTHTNARTRKGPAKAIAGKKK.

Belongs to the universal ribosomal protein uS13 family. In terms of assembly, part of the 30S ribosomal subunit. Forms a loose heterodimer with protein S19. Forms two bridges to the 50S subunit in the 70S ribosome.

Located at the top of the head of the 30S subunit, it contacts several helices of the 16S rRNA. In the 70S ribosome it contacts the 23S rRNA (bridge B1a) and protein L5 of the 50S subunit (bridge B1b), connecting the 2 subunits; these bridges are implicated in subunit movement. Contacts the tRNAs in the A and P-sites. In Bartonella tribocorum (strain CIP 105476 / IBS 506), this protein is Small ribosomal subunit protein uS13.